Here is an 88-residue protein sequence, read N- to C-terminus: Small ribosomal subunit protein bS20 (88 aa).

Belongs to the bacterial ribosomal protein bS20 family.

Binds directly to 16S ribosomal RNA. This chain is Small ribosomal subunit protein bS20, found in Blochmanniella floridana.